A 439-amino-acid chain; its full sequence is 3-phosphoshikimate 1-carboxyvinyltransferase (439 aa).

Lysine 25, serine 26, and arginine 30 together coordinate 3-phosphoshikimate. Lysine 25 is a phosphoenolpyruvate binding site. Positions 96 and 124 each coordinate phosphoenolpyruvate. Positions 170, 171, 172, 202, 324, and 351 each coordinate 3-phosphoshikimate. Residue glutamine 172 participates in phosphoenolpyruvate binding. Catalysis depends on aspartate 324, which acts as the Proton acceptor. Arginine 355, arginine 399, and lysine 424 together coordinate phosphoenolpyruvate.

This sequence belongs to the EPSP synthase family. Monomer.

The protein resides in the cytoplasm. It catalyses the reaction 3-phosphoshikimate + phosphoenolpyruvate = 5-O-(1-carboxyvinyl)-3-phosphoshikimate + phosphate. The protein operates within metabolic intermediate biosynthesis; chorismate biosynthesis; chorismate from D-erythrose 4-phosphate and phosphoenolpyruvate: step 6/7. Functionally, catalyzes the transfer of the enolpyruvyl moiety of phosphoenolpyruvate (PEP) to the 5-hydroxyl of shikimate-3-phosphate (S3P) to produce enolpyruvyl shikimate-3-phosphate and inorganic phosphate. This is 3-phosphoshikimate 1-carboxyvinyltransferase from Bordetella avium (strain 197N).